Here is a 218-residue protein sequence, read N- to C-terminus: MKLILLGAPGAGKGTQAQFICQKFGIPQISTGDMLRAAVKAGTPLGLEAKKVMDAGGLVSDDIIIGLVKERIAQADCANGFLFDGFPRTIPQAEAMKAAGVNLDFVVEIDVPDSAIVERMSGRRVHVASGRTYHVKFNPPKVAGKDDETGEDLIQRADDNEETVLKRLAVYHEQTEVLVGYYSNMAASGDKTAPTYVKIPGVGSVDGIRDAIFRALGA.

Position 10–15 (10–15 (GAGKGT)) interacts with ATP. An NMP region spans residues 30–59 (STGDMLRAAVKAGTPLGLEAKKVMDAGGLV). AMP contacts are provided by residues T31, R36, 57 to 59 (GLV), 85 to 88 (GFPR), and Q92. The interval 122 to 159 (GRRVHVASGRTYHVKFNPPKVAGKDDETGEDLIQRADD) is LID. ATP-binding positions include R123 and 132–133 (TY). 2 residues coordinate AMP: R156 and R167. G203 provides a ligand contact to ATP.

This sequence belongs to the adenylate kinase family. Monomer.

It localises to the cytoplasm. It carries out the reaction AMP + ATP = 2 ADP. Its pathway is purine metabolism; AMP biosynthesis via salvage pathway; AMP from ADP: step 1/1. Its function is as follows. Catalyzes the reversible transfer of the terminal phosphate group between ATP and AMP. Plays an important role in cellular energy homeostasis and in adenine nucleotide metabolism. The protein is Adenylate kinase of Laribacter hongkongensis (strain HLHK9).